We begin with the raw amino-acid sequence, 629 residues long: Putative polypeptide N-acetylgalactosaminyltransferase 10 (629 aa).

At 1–12 (MGLSRYLSRRHH) the chain is on the cytoplasmic side. The chain crosses the membrane as a helical; Signal-anchor for type II membrane protein span at residues 13–33 (WVIQYCALLLFLYFIYSYVAV). The Lumenal portion of the chain corresponds to 34–629 (SNDAPRLNEE…RQANEHKELE (596 aa)). N143 and N177 each carry an N-linked (GlcNAc...) asparagine glycan. Intrachain disulfides connect C154-C385, C376-C454, C493-C510, C539-C556, and C582-C598. The interval 163–275 (LPTVSVIFPF…YNWLPPLLDP (113 aa)) is catalytic subdomain A. Positions 204 and 236 each coordinate substrate. Mn(2+) contacts are provided by D259 and H261. The segment at 331-393 (PFDSPVMAGG…PCSRVAHIYR (63 aa)) is catalytic subdomain B. W362 is a binding site for substrate. Residue H390 coordinates Mn(2+). R393 serves as a coordination point for substrate. Residues 393 to 406 (RCKYAPFKNAGMGD) form a flexible loop region. The 104-residue stretch at 526-629 (TRWHDIRPKG…RQANEHKELE (104 aa)) folds into the Ricin B-type lectin domain.

This sequence belongs to the glycosyltransferase 2 family. GalNAc-T subfamily. Requires Mn(2+) as cofactor.

The protein resides in the golgi apparatus membrane. The catalysed reaction is L-seryl-[protein] + UDP-N-acetyl-alpha-D-galactosamine = a 3-O-[N-acetyl-alpha-D-galactosaminyl]-L-seryl-[protein] + UDP + H(+). The enzyme catalyses L-threonyl-[protein] + UDP-N-acetyl-alpha-D-galactosamine = a 3-O-[N-acetyl-alpha-D-galactosaminyl]-L-threonyl-[protein] + UDP + H(+). Its pathway is protein modification; protein glycosylation. May catalyze the initial reaction in O-linked oligosaccharide biosynthesis, the transfer of an N-acetyl-D-galactosamine residue to a serine or threonine residue on the protein receptor. This is Putative polypeptide N-acetylgalactosaminyltransferase 10 from Caenorhabditis briggsae.